We begin with the raw amino-acid sequence, 494 residues long: Cobyric acid synthase (494 aa).

The region spanning 249 to 443 (EINVTILRLP…LHGIFDNGAW (195 aa)) is the GATase cobBQ-type domain. C330 serves as the catalytic Nucleophile. Residue H435 is part of the active site.

The protein belongs to the CobB/CobQ family. CobQ subfamily.

It functions in the pathway cofactor biosynthesis; adenosylcobalamin biosynthesis. Catalyzes amidations at positions B, D, E, and G on adenosylcobyrinic A,C-diamide. NH(2) groups are provided by glutamine, and one molecule of ATP is hydrogenolyzed for each amidation. This is Cobyric acid synthase from Crocosphaera subtropica (strain ATCC 51142 / BH68) (Cyanothece sp. (strain ATCC 51142)).